The following is a 414-amino-acid chain: NFATC2-interacting protein (414 aa).

A disordered region spans residues 1 to 42 (MAEPLRRRGPRSRGGRASRGARRARAARGRCPRAPRSPTRLI). The span at 7–33 (RRGPRSRGGRASRGARRARAARGRCPR) shows a compositional bias: basic residues. S52 and S54 each carry phosphoserine. The segment at 63-118 (ADPGEVPVARLPAPAAPEQDSDSDSEGAAEGPAGAPRTLVRRRRRLLDPGEAPVVP) is disordered. Over residues 68–79 (VPVARLPAPAAP) the composition is skewed to low complexity. 3 positions are modified to phosphoserine: S83, S85, and S87. The span at 90-100 (AAEGPAGAPRT) shows a compositional bias: low complexity. Phosphoserine is present on S121. K123 is covalently cross-linked (Glycyl lysine isopeptide (Lys-Gly) (interchain with G-Cter in SUMO2)). The interval 139–208 (KLCPSEPEDE…SSRNKSRKHT (70 aa)) is disordered. Residues 170–229 (KKKLRKKHEKEEKKMEEFPDQDISPLPQPSSRNKSRKHTEALQKLREVNKRLQDLRSCLS) are a coiled coil. Residues S193, S199, and S309 each carry the phosphoserine modification. Phosphothreonine occurs at positions 311 and 313. One can recognise a Ubiquitin-like domain in the interval 343–414 (LRLRVQGKEK…ESGDLIEVWG (72 aa)). Phosphoserine occurs at positions 364 and 385.

As to quaternary structure, interacts with NFATC2, TRAF1, TRAF2 and PRMT1. Interacts with UBE2I/UBC9. In terms of processing, methylation at the N-terminus by PRMT1 modulates interaction with the NFAT complex and results in augmented cytokine production.

It localises to the nucleus. It is found in the cytoplasm. In T-helper 2 (Th2) cells, regulates the magnitude of NFAT-driven transcription of a specific subset of cytokine genes, including IL3, IL4, IL5 and IL13, but not IL2. Recruits PRMT1 to the IL4 promoter; this leads to enhancement of histone H4 'Arg-3'-methylation and facilitates subsequent histone acetylation at the IL4 locus, thus promotes robust cytokine expression. Down-regulates formation of poly-SUMO chains by UBE2I/UBC9. This Rattus norvegicus (Rat) protein is NFATC2-interacting protein (Nfatc2ip).